The sequence spans 144 residues: MIKLESLQDPSPRKRRTKLLGRGPSSGHGKTSCRGHKGDGSRSGYKRRFGYEGGGVPLYRRVPTRGFSHKRFDKCVEEITTQRLNVLFNEGEEITLDALKEKRAIDKHAIRVKVIVKGELEKTFIWKDANVVLSQGVRNLIGVA.

Residues M1–R48 form a disordered region.

Belongs to the universal ribosomal protein uL15 family. Part of the 50S ribosomal subunit.

Functionally, binds to the 23S rRNA. This Chlamydia caviae (strain ATCC VR-813 / DSM 19441 / 03DC25 / GPIC) (Chlamydophila caviae) protein is Large ribosomal subunit protein uL15.